Here is a 240-residue protein sequence, read N- to C-terminus: Probable Ni/Fe-hydrogenase B-type cytochrome subunit (240 aa).

Transmembrane regions (helical) follow at residues 31–51 (LWHWVTALSIVVLGVTGYFIG), 75–95 (FAAGYVLAIGFLGRVYWAFVG), 142–163 (LAMFCFFVIGAVFMSVTGFALY), and 196–213 (LGMWYLVVFVMIHVYLAA).

Belongs to the HupC/HyaC/HydC family.

It is found in the cell membrane. Probable b-type cytochrome. The polypeptide is Probable Ni/Fe-hydrogenase B-type cytochrome subunit (hupZ) (Azotobacter chroococcum mcd 1).